Here is a 760-residue protein sequence, read N- to C-terminus: Xaa-Pro dipeptidyl-peptidase (760 aa).

Active-site charge relay system residues include Ser349, Asp469, and His499.

The protein belongs to the peptidase S15 family. In terms of assembly, homodimer.

Its subcellular location is the cytoplasm. It catalyses the reaction Hydrolyzes Xaa-Pro-|- bonds to release unblocked, N-terminal dipeptides from substrates including Ala-Pro-|-p-nitroanilide and (sequentially) Tyr-Pro-|-Phe-Pro-|-Gly-Pro-|-Ile.. Functionally, removes N-terminal dipeptides sequentially from polypeptides having unsubstituted N-termini provided that the penultimate residue is proline. In Streptococcus pyogenes serotype M5 (strain Manfredo), this protein is Xaa-Pro dipeptidyl-peptidase.